A 77-amino-acid chain; its full sequence is U8-lycotoxin-Ls1v (77 aa).

A signal peptide spans 1–20 (MKLIIFTGLVLFGIVSLIEA). The propeptide occupies 21 to 26 (QAENEK).

It belongs to the neurotoxin 19 (CSTX) family. 08 (U8-Lctx) subfamily. Post-translationally, contains 4 disulfide bonds. Expressed by the venom gland.

It is found in the secreted. The chain is U8-lycotoxin-Ls1v from Lycosa singoriensis (Wolf spider).